A 362-amino-acid polypeptide reads, in one-letter code: MASASRQILRAASRASTRTAFAPAASRGLAARTIAGRRFYSSSSEPAKASSSNLGWIAGALAAAAAGAGYWYTQNGGAATLTKPEFKDYQTVYNDIASRLEENPDYDDGSYGPVLVRLAWHASGTYDKETGTGGSNGATMRFSPEGGHGANAGLKAARDFLEPIKAKYPWITYSDLWILGGVCAIQEMLGPKIPYRPGRSDKDAAACTPDGRLPDAAQRQDHVRNIFYRMGFNDQEIVALAGAHALGRCHTDRSGFDGPWTFSPTVLTNDYFKLLLNEKWEYKKWDGPKQYVDSKTKSLMMLPADMCLIEDKKFKEWTKKYADDNDLFFKDFSAAVLKLFELGVPFAEGTENQRWIFKPTSE.

The N-terminal 40 residues, 1-40 (MASASRQILRAASRASTRTAFAPAASRGLAARTIAGRRFY), are a transit peptide targeting the mitochondrion. The Proton acceptor role is filled by histidine 121. Position 244 (histidine 244) interacts with heme b. Tryptophan 260 serves as the catalytic Tryptophan radical intermediate.

This sequence belongs to the peroxidase family. Cytochrome c peroxidase subfamily. In terms of assembly, forms a one-to-one complex with cytochrome c. Heme b is required as a cofactor.

The protein resides in the mitochondrion matrix. It localises to the mitochondrion intermembrane space. The enzyme catalyses 2 Fe(II)-[cytochrome c] + H2O2 + 2 H(+) = 2 Fe(III)-[cytochrome c] + 2 H2O. Its function is as follows. Destroys radicals which are normally produced within the cells and which are toxic to biological systems. The chain is Cytochrome c peroxidase, mitochondrial (CCP1) from Pyricularia oryzae (strain 70-15 / ATCC MYA-4617 / FGSC 8958) (Rice blast fungus).